We begin with the raw amino-acid sequence, 1081 residues long: Protein QUIRKY (1081 aa).

The C2 1 domain occupies 1 to 124 (MNTTPFHSDP…SRRGEEGLVY (124 aa)). 2 disordered regions span residues 154 to 198 (DTAG…MNIP) and 238 to 323 (PQHV…MEKK). Positions 163-176 (QQQQQQQQFHPPQQ) are enriched in low complexity. A compositionally biased stretch (basic and acidic residues) spans 248–257 (NHPHRNDNHP). Residues 258–268 (QRPPSPPPPPS) are compositionally biased toward pro residues. C2 domains are found at residues 318-440 (TTME…PQWY), 477-605 (SSDA…SKWH), and 652-778 (VCSD…TNSY). Glutamate 351, serine 352, aspartate 408, and serine 413 together coordinate Ca(2+). 3 consecutive transmembrane segments (helical) span residues 879–899 (WYRIVGVLAWAVGLAKWLDNI), 916–936 (LVLVWYPDLVVPTAFLYVVMI), and 1024–1044 (LFIAICLVITIVLYAVPAKMV).

It belongs to the MCTP family. In terms of assembly, interacts with SUB/SCM and POQ at the plasma membrane. Binds to SUB/SCM at plasmodesmata (PD) in root epidermal cells to promote tissue morphogenesis. Ca(2+) serves as cofactor. Observed mainly in flowers, and, to a lower extent, in seedlings, roots, shoots, leaves, stems and inflorescences. Expressed in the vascular tissues of roots, cotyledons and rosette leaves. Accumulates in roots meristems.

The protein resides in the cell membrane. Its subcellular location is the cytoplasm. The protein localises to the golgi apparatus membrane. It is found in the cell junction. It localises to the plasmodesma. Functionally, may be involved in Ca 2(+)-dependent signaling and membrane trafficking. Plays a role in fruit dehiscence. Components of the machinery involved in organ development mediated by the receptor-like kinase STRUBBELIG (SUB). Collaboratively with SUB and POQ, regulates cell growth anisotropy during gynoecium development, thus linking together cell-cell communication and cellular growth. Together with SUB/SCM, links RLK-dependent signal transduction and intercellular communication mediated by plasmodesmata (PD) to regulate tissue morphogenesis. May function as a signaling molecule by regulating the trafficking of other regulators. This is Protein QUIRKY from Arabidopsis thaliana (Mouse-ear cress).